Reading from the N-terminus, the 301-residue chain is Phosphatidylcholine:diacylglycerol cholinephosphotransferase 1 (301 aa).

Residues 1–39 are disordered; sequence MSAAAAETDVSLRRRSNSLNGNHTNGVAIDGTLDNNNRR. A run of 5 helical transmembrane segments spans residues 88–108, 141–161, 171–191, 202–222, and 255–275; these read HWIPCMFAAGLLFFMGVEYTL, VLAALNTVFVGMQTTYIVWTW, IAALFMFTCRGILGYSTQLPL, FPVGNVSFFLFFSGHVAGSMI, and GHYTIDLAVGVGAGILFDSLA. Catalysis depends on residues histidine 216, histidine 256, and aspartate 260.

It belongs to the phosphatidylcholine:diacylglycerol cholinephosphotransferase family.

The protein resides in the membrane. The catalysed reaction is 1,2-ditetradecanoyl-sn-glycero-3-phosphocholine + 1,2-di-(9Z-octadecenoyl)-sn-glycerol = 1,2-ditetradecanoyl-sn-glycerol + 1,2-di-(9Z-octadecenoyl)-sn-glycero-3-phosphocholine. Functionally, functions as a phosphatidylcholine:diacylglycerol cholinephosphotransferase that catalyzes the transfer of the phosphocholine headgroup from phosphatidylcholine (PC) to diacylglycerol, a major reaction for the transfer of 18:1 into phosphatidylcholine for desaturation and also for the reverse transfer of 18:2 and 18:3 into the triacylglycerols synthesis pathway. This chain is Phosphatidylcholine:diacylglycerol cholinephosphotransferase 1, found in Arabidopsis thaliana (Mouse-ear cress).